Here is a 410-residue protein sequence, read N- to C-terminus: Regulator of microtubule dynamics protein 2 (410 aa).

Residues 10–27 (IFGIMVGTAGISLLLLWY) traverse the membrane as a helical segment. Residue S51 is modified to Phosphoserine. The stretch at 68–110 (FQERQLQILEKLNELLTNMEELKEEIRFLKETVPKLEEYIQDE) forms a coiled coil. Position 121 is a phosphoserine (S121). The segment covering 122-131 (PQHRARKRRL) has biased composition (basic residues). The segment at 122–151 (PQHRARKRRLPTIQSSATSNSSEEAESEGG) is disordered. T139 is subject to Phosphothreonine. Residue Y152 is modified to Phosphotyrosine. T154 and T157 each carry phosphothreonine.

Belongs to the RMDN family. As to quaternary structure, interacts with microtubules.

Its subcellular location is the membrane. The protein resides in the cytoplasm. It is found in the cytoskeleton. The protein localises to the spindle. It localises to the spindle pole. The chain is Regulator of microtubule dynamics protein 2 (RMDN2) from Macaca fascicularis (Crab-eating macaque).